The sequence spans 71 residues: DNA-directed RNA polymerase subunit omega (71 aa).

It belongs to the RNA polymerase subunit omega family. The RNAP catalytic core consists of 2 alpha, 1 beta, 1 beta' and 1 omega subunit. When a sigma factor is associated with the core the holoenzyme is formed, which can initiate transcription.

It catalyses the reaction RNA(n) + a ribonucleoside 5'-triphosphate = RNA(n+1) + diphosphate. Its function is as follows. Promotes RNA polymerase assembly. Latches the N- and C-terminal regions of the beta' subunit thereby facilitating its interaction with the beta and alpha subunits. The chain is DNA-directed RNA polymerase subunit omega from Azoarcus sp. (strain BH72).